The chain runs to 456 residues: tRNA-2-methylthio-N(6)-dimethylallyladenosine synthase (456 aa).

Residues 9–126 enclose the MTTase N-terminal domain; that stretch reads KKLYIKTHGC…LPEMMETKKS (118 aa). [4Fe-4S] cluster contacts are provided by cysteine 18, cysteine 55, cysteine 89, cysteine 163, cysteine 167, and cysteine 170. One can recognise a Radical SAM core domain in the interval 149–381; it reads DADGVSAFVS…QDRITQQAMA (233 aa). The 65-residue stretch at 384 to 448 folds into the TRAM domain; the sequence is RRMVGNTERI…PNSLRGSLIA (65 aa).

The protein belongs to the methylthiotransferase family. MiaB subfamily. In terms of assembly, monomer. [4Fe-4S] cluster serves as cofactor.

The protein resides in the cytoplasm. It catalyses the reaction N(6)-dimethylallyladenosine(37) in tRNA + (sulfur carrier)-SH + AH2 + 2 S-adenosyl-L-methionine = 2-methylsulfanyl-N(6)-dimethylallyladenosine(37) in tRNA + (sulfur carrier)-H + 5'-deoxyadenosine + L-methionine + A + S-adenosyl-L-homocysteine + 2 H(+). In terms of biological role, catalyzes the methylthiolation of N6-(dimethylallyl)adenosine (i(6)A), leading to the formation of 2-methylthio-N6-(dimethylallyl)adenosine (ms(2)i(6)A) at position 37 in tRNAs that read codons beginning with uridine. This is tRNA-2-methylthio-N(6)-dimethylallyladenosine synthase from Cellvibrio japonicus (strain Ueda107) (Pseudomonas fluorescens subsp. cellulosa).